The chain runs to 37 residues: Potassium channel toxin alpha-KTx 3.9 (37 aa).

3 cysteine pairs are disulfide-bonded: C7/C27, C13/C32, and C17/C34. Residues 25–32 (GKCMNRKC) form an interaction with Ca(2+)-activated K(+) channels region.

It belongs to the short scorpion toxin superfamily. Potassium channel inhibitor family. Alpha-KTx 03 subfamily. In terms of tissue distribution, expressed by the venom gland.

The protein resides in the secreted. In terms of biological role, binds and inhibits potassium channels. Intracerebroventricular injection into mice induces paralyzing symptoms followed by death. Its binding affinity to rat brain synaptosomes is 5-fold lower than this of KTX 1. The sequence is that of Potassium channel toxin alpha-KTx 3.9 (KTX3) from Buthus occitanus tunetanus (Common European scorpion).